Reading from the N-terminus, the 104-residue chain is L-rhamnose mutarotase (104 aa).

Tyr-18 lines the substrate pocket. His-22 functions as the Proton donor in the catalytic mechanism. Substrate contacts are provided by residues Tyr-41 and Trp-76–Trp-77.

The protein belongs to the rhamnose mutarotase family. Homodimer.

It is found in the cytoplasm. It catalyses the reaction alpha-L-rhamnose = beta-L-rhamnose. It functions in the pathway carbohydrate metabolism; L-rhamnose metabolism. In terms of biological role, involved in the anomeric conversion of L-rhamnose. This is L-rhamnose mutarotase from Shigella flexneri serotype 5b (strain 8401).